The sequence spans 341 residues: Serine/threonine-protein kinase pdik1l (341 aa).

Residues 8–332 form the Protein kinase domain; it reads YELIQEVGRG…FELELRLVRI (325 aa). Residue 14 to 22 coordinates ATP; sequence VGRGSYGVV. Asp-164 acts as the Proton acceptor in catalysis.

It belongs to the protein kinase superfamily. Ser/Thr protein kinase family.

The protein resides in the nucleus. The catalysed reaction is L-seryl-[protein] + ATP = O-phospho-L-seryl-[protein] + ADP + H(+). The enzyme catalyses L-threonyl-[protein] + ATP = O-phospho-L-threonyl-[protein] + ADP + H(+). In Danio rerio (Zebrafish), this protein is Serine/threonine-protein kinase pdik1l (pdik1l).